We begin with the raw amino-acid sequence, 72 residues long: Translation initiation factor IF-1 (72 aa).

Positions 1–72 (MAKEDNIEMQ…TKGRIVFRAR (72 aa)) constitute an S1-like domain.

Belongs to the IF-1 family. In terms of assembly, component of the 30S ribosomal translation pre-initiation complex which assembles on the 30S ribosome in the order IF-2 and IF-3, IF-1 and N-formylmethionyl-tRNA(fMet); mRNA recruitment can occur at any time during PIC assembly.

It is found in the cytoplasm. In terms of biological role, one of the essential components for the initiation of protein synthesis. Stabilizes the binding of IF-2 and IF-3 on the 30S subunit to which N-formylmethionyl-tRNA(fMet) subsequently binds. Helps modulate mRNA selection, yielding the 30S pre-initiation complex (PIC). Upon addition of the 50S ribosomal subunit IF-1, IF-2 and IF-3 are released leaving the mature 70S translation initiation complex. The sequence is that of Translation initiation factor IF-1 from Shewanella baltica (strain OS155 / ATCC BAA-1091).